Consider the following 475-residue polypeptide: Peroxisome proliferator-activated receptor gamma (475 aa).

Residue threonine 54 is glycosylated (O-linked (GlcNAc) threonine). Serine 82 is subject to Phosphoserine; by MAPK. Positions 106–180 (AIECRVCGDK…VGMSHNAIRF (75 aa)) form a DNA-binding region, nuclear receptor. 2 consecutive NR C4-type zinc fingers follow at residues 109–129 (CRVCGDKASGFHYGVHACEGC) and 146–168 (CDLNCRIHKKSRNKCQYCRFQKC). The interaction with FAM120B stretch occupies residues 175 to 250 (HNAIRFGRMP…DKSPFVIYDM (76 aa)). The region spanning 208 to 473 (DLRALAKHLY…HPLLQEIYKD (266 aa)) is the NR LBD domain. Residue lysine 222 forms a Glycyl lysine isopeptide (Lys-Gly) (interchain with G-Cter in ubiquitin) linkage. Positions 465-473 (PLLQEIYKD) match the 9aaTAD motif.

The protein belongs to the nuclear hormone receptor family. NR1 subfamily. Interacts with FOXO1 (acetylated form). Heterodimer with other nuclear receptors, such as RXRA. The heterodimer with the retinoic acid receptor RXRA is called adipocyte-specific transcription factor ARF6. Interacts with NCOA6 coactivator, leading to a strong increase in transcription of target genes. Interacts with coactivator PPARBP, leading to a mild increase in transcription of target genes. Interacts with NOCA7 in a ligand-inducible manner. Interacts with NCOA1 and NCOA2 LXXLL motifs. Interacts with ASXL1, ASXL2, DNTTIP2, FAM120B, MAP2K1/MEK1, NR0B2, PDPK1, PRDM16, PRMT2 and TGFB1I1. Interacts (when activated by agonist) with PPP5C. Interacts with HELZ2 and THRAP3; the interaction stimulates the transcriptional activity of PPARG. Interacts with PER2, the interaction is ligand dependent and blocks PPARG recruitment to target promoters. Interacts with NOCT. Interacts with ACTN4. Interacts (when in the liganded conformation) with GPS2. Interacts with CRY1 and CRY2 in a ligand-dependent manner. In the absence of hormonal ligand, interacts with TACC1. In macrophages, interacts with PAQR3 and STUB1; the interactions promote PPARG poylubiquitination and STUB1-mediated degradation. Post-translationally, O-GlcNAcylation at Thr-54 reduces transcriptional activity in adipocytes. Phosphorylated at basal conditions and dephosphorylated when treated with the ligand. May be dephosphorylated by PPP5C. The phosphorylated form may be inactive and dephosphorylation induces adipogenic activity. In terms of processing, ubiquitinated by E3 ubiquitin-protein ligase complex containing FBXO9; leading to proteasomal degradation. Ubiquitinated at Lys-222 by TRIM55 leading to proteasomal degradation. Ubiquitinated by E3 ubiquitin-protein ligase STUB1/CHIP; leading to proteasomal degradation.

It is found in the nucleus. The protein resides in the cytoplasm. PDPK1 activates its transcriptional activity independently of its kinase activity. Interacts with HELZ2 and THRAP3; the interaction enhances the transcriptional activity of PPARG. Nuclear receptor that binds peroxisome proliferators such as hypolipidemic drugs and fatty acids. Once activated by a ligand, the nuclear receptor binds to DNA specific PPAR response elements (PPRE) and modulates the transcription of its target genes, such as acyl-CoA oxidase. It therefore controls the peroxisomal beta-oxidation pathway of fatty acids. Key regulator of adipocyte differentiation and glucose homeostasis. ARF6 acts as a key regulator of the tissue-specific adipocyte P2 (aP2) enhancer. Acts as a critical regulator of gut homeostasis by suppressing NF-kappa-B-mediated pro-inflammatory responses. Plays a role in the regulation of cardiovascular circadian rhythms by regulating the transcription of BMAL1 in the blood vessels. In Cricetulus griseus (Chinese hamster), this protein is Peroxisome proliferator-activated receptor gamma (PPARG).